The following is a 316-amino-acid chain: Beta-ketoacyl-[acyl-carrier-protein] synthase III (316 aa).

Residues C112 and H243 contribute to the active site. The tract at residues 244-248 (QANLR) is ACP-binding. N273 is a catalytic residue.

This sequence belongs to the thiolase-like superfamily. FabH family. Homodimer.

The protein resides in the cytoplasm. The enzyme catalyses malonyl-[ACP] + acetyl-CoA + H(+) = 3-oxobutanoyl-[ACP] + CO2 + CoA. Its pathway is lipid metabolism; fatty acid biosynthesis. In terms of biological role, catalyzes the condensation reaction of fatty acid synthesis by the addition to an acyl acceptor of two carbons from malonyl-ACP. Catalyzes the first condensation reaction which initiates fatty acid synthesis and may therefore play a role in governing the total rate of fatty acid production. Possesses both acetoacetyl-ACP synthase and acetyl transacylase activities. Its substrate specificity determines the biosynthesis of branched-chain and/or straight-chain of fatty acids. The protein is Beta-ketoacyl-[acyl-carrier-protein] synthase III of Yersinia pseudotuberculosis serotype O:1b (strain IP 31758).